Reading from the N-terminus, the 25-residue chain is Superoxide dismutase [Mn], mitochondrial (25 aa).

His-9 provides a ligand contact to Mn(2+).

This sequence belongs to the iron/manganese superoxide dismutase family. Homotetramer. Mn(2+) is required as a cofactor.

It localises to the mitochondrion matrix. It carries out the reaction 2 superoxide + 2 H(+) = H2O2 + O2. Its function is as follows. Destroys superoxide anion radicals which are normally produced within the cells and which are toxic to biological systems. In Alternaria alternata (Alternaria rot fungus), this protein is Superoxide dismutase [Mn], mitochondrial.